A 79-amino-acid polypeptide reads, in one-letter code: Conotoxin LiCr173 (79 aa).

An N-terminal signal peptide occupies residues 1-20; that stretch reads MSGLGTMVLTLLLLVFMVTS. The propeptide occupies 21–46; the sequence is HQDGGKKQATQRNAVNIRRRKSITQR. Cystine bridges form between cysteine 52/cysteine 64, cysteine 56/cysteine 73, and cysteine 63/cysteine 77. Phenylalanine 78 is subject to Phenylalanine amide.

It belongs to the conotoxin O3 superfamily. Expressed by the venom duct.

The protein resides in the secreted. This Conus lividus (Livid cone) protein is Conotoxin LiCr173.